Here is a 206-residue protein sequence, read N- to C-terminus: Inosine triphosphate pyrophosphatase (206 aa).

21 to 26 (TGNAKK) is an ITP binding site. Glutamate 49 contributes to the Mg(2+) binding site. ITP is bound by residues lysine 61, 77-78 (DT), lysine 94, 153-156 (FGWD), lysine 176, and 181-182 (HR).

The protein belongs to the HAM1 NTPase family. As to quaternary structure, homodimer. Mg(2+) is required as a cofactor. The cofactor is Mn(2+).

The protein resides in the cytoplasm. The enzyme catalyses ITP + H2O = IMP + diphosphate + H(+). It carries out the reaction dITP + H2O = dIMP + diphosphate + H(+). It catalyses the reaction XTP + H2O = XMP + diphosphate + H(+). Its function is as follows. Pyrophosphatase that hydrolyzes non-canonical purine nucleotides such as inosine triphosphate (ITP), deoxyinosine triphosphate (dITP) or xanthosine 5'-triphosphate (XTP) to their respective monophosphate derivatives. The enzyme does not distinguish between the deoxy- and ribose forms. Probably excludes non-canonical purines from RNA and DNA precursor pools, thus preventing their incorporation into RNA and DNA and avoiding chromosomal lesions. The polypeptide is Inosine triphosphate pyrophosphatase (Vitis vinifera (Grape)).